Consider the following 279-residue polypeptide: Diaminopimelate epimerase (279 aa).

Substrate contacts are provided by Asn13 and Asn66. The active-site Proton donor is the Cys75. Substrate contacts are provided by residues 76-77, Asn164, Asn197, and 215-216; these read GN and ER. Residue Cys224 is the Proton acceptor of the active site. 225–226 is a binding site for substrate; sequence GT.

It belongs to the diaminopimelate epimerase family. In terms of assembly, homodimer.

It is found in the cytoplasm. The enzyme catalyses (2S,6S)-2,6-diaminopimelate = meso-2,6-diaminopimelate. It functions in the pathway amino-acid biosynthesis; L-lysine biosynthesis via DAP pathway; DL-2,6-diaminopimelate from LL-2,6-diaminopimelate: step 1/1. In terms of biological role, catalyzes the stereoinversion of LL-2,6-diaminopimelate (L,L-DAP) to meso-diaminopimelate (meso-DAP), a precursor of L-lysine and an essential component of the bacterial peptidoglycan. This is Diaminopimelate epimerase from Nostoc punctiforme (strain ATCC 29133 / PCC 73102).